Reading from the N-terminus, the 418-residue chain is MAFIVAMGMILMAGICPAVLCFPDGTKEMDIVFHEHQDNGTQDDSLTLASVNTDFAFSLYKKLALKNPDTNIVFSPLSISAALALVSLGAKGKTMEEILEGLKFNLTETPEADIHQGFGNLLQSLSQPEDQDQINIGNAMFIEKDLQILAEFHEKTRALYQTEAFTADFQQPTEAKNLINDYVSNQTQGMIKELISELDERTLMVLVNYIYFKGKWKISFDPQDTFESEFYLDEKRSVKVPMMKMKLLTTRHFRDEELSCSVLELKYTGNASALLILPDQGRMQQVEASLQPETLRKWRKTLFPSQIEELNLPKFSIASNYRLEEDVLPEMGIKEVFTEQADLSGITETKKLSVSQVVHKAVLDVAETGTEAAAATGVIGGIRKAILPAVHFNRPFLFVIYHTSAQSILFMAKVNNPK.

A signal peptide spans 1–21 (MAFIVAMGMILMAGICPAVLC). N-linked (GlcNAc...) asparagine glycans are attached at residues N39, N105, N185, and N270. Residues 369–394 (GTEAAAATGVIGGIRKAILPAVHFNR) form an RCL region.

This sequence belongs to the serpin family. As to expression, expressed in liver and secreted in plasma.

It is found in the secreted. Functionally, contrapsin inhibits trypsin-like proteases. The chain is Serine protease inhibitor A3K (Serpina3k) from Mus musculus (Mouse).